The chain runs to 528 residues: Ulvan lyase, short isoform (528 aa).

The first 29 residues, methionine 1–alanine 29, serve as a signal peptide directing secretion. Cysteine 30 carries N-palmitoyl cysteine lipidation. A lipid anchor (S-diacylglycerol cysteine) is attached at cysteine 30. Residue serine 151–histidine 152 coordinates substrate. The active-site Proton donor/acceptor is the histidine 152. Ca(2+) is bound by residues aspartate 218, aspartate 228, and lysine 230. Substrate is bound by residues tyrosine 309 and arginine 326. The Ca(2+) site is built by asparagine 329, aspartate 332, and phenylalanine 334. Histidine 390 is a substrate binding site.

This sequence belongs to the polysaccharide lyase 24 family.

The protein resides in the secreted. The protein localises to the cell membrane. Ulvan lyase involved in ulvan degradation. Ulvan is the main polysaccharide component of the Ulvales (green seaweed) cell wall. It is composed of disaccharide building blocks comprising 3-sulfated rhamnose (Rha3S) linked to D-glucuronic acid (GlcA), L-iduronic acid (IduA), or D-xylose (Xyl). Ulvan lyase catalyzes preferentially the endolytic cleavage of the glycosidic bond between Rha3S and the uronic acid GlcA, but not IduA, producing oligosaccharides that have unsaturated 4-deoxy-L-threo-hex-4-enopyranosiduronic acid (deltaUA) at the non-reducing end. The most abundant end products in the degradation of the ulvan polysaccharide were deltaUA-Rha3S disaccharides and deltaUA-Rha3S-IduA-Rha3S and deltaUA-Rha3S-Xyl-Rha3S tetrasaccharides. The polypeptide is Ulvan lyase, short isoform (Alteromonas sp. (strain LOR)).